The primary structure comprises 154 residues: Ribonuclease H (154 aa).

Residues 5–146 (EQNIVYLYCD…ADELANRGID (142 aa)) enclose the RNase H type-1 domain. Asp-14, Glu-52, Asp-74, and Asp-138 together coordinate Mg(2+).

It belongs to the RNase H family. As to quaternary structure, monomer. It depends on Mg(2+) as a cofactor.

It is found in the cytoplasm. It catalyses the reaction Endonucleolytic cleavage to 5'-phosphomonoester.. Its function is as follows. Endonuclease that specifically degrades the RNA of RNA-DNA hybrids. The protein is Ribonuclease H of Coxiella burnetii (strain CbuK_Q154) (Coxiella burnetii (strain Q154)).